The following is a 634-amino-acid chain: DNA-directed RNA polymerase subunit gamma (634 aa).

The Zn(2+) site is built by cysteine 74, cysteine 76, cysteine 89, and cysteine 92. Residues aspartate 471, aspartate 473, and aspartate 475 each coordinate Mg(2+).

Belongs to the RNA polymerase beta' chain family. RpoC1 subfamily. In terms of assembly, in cyanobacteria the RNAP catalytic core is composed of 2 alpha, 1 beta, 1 beta', 1 gamma and 1 omega subunit. When a sigma factor is associated with the core the holoenzyme is formed, which can initiate transcription. Mg(2+) is required as a cofactor. The cofactor is Zn(2+).

The enzyme catalyses RNA(n) + a ribonucleoside 5'-triphosphate = RNA(n+1) + diphosphate. Its function is as follows. DNA-dependent RNA polymerase catalyzes the transcription of DNA into RNA using the four ribonucleoside triphosphates as substrates. The polypeptide is DNA-directed RNA polymerase subunit gamma (Synechococcus sp. (strain CC9311)).